The chain runs to 279 residues: HTH-type transcriptional regulator HdfR (279 aa).

In terms of domain architecture, HTH lysR-type spans 1 to 58; that stretch reads MDTELLKTFLEVSRTRHFGRAAESLYLTQSAVSFRIRQLENQLGVNLFTRHRNNIRLT. The H-T-H motif DNA-binding region spans 18–37; it reads FGRAAESLYLTQSAVSFRIR.

This sequence belongs to the LysR transcriptional regulatory family.

Functionally, negatively regulates the transcription of the flagellar master operon flhDC by binding to the upstream region of the operon. In Escherichia coli O17:K52:H18 (strain UMN026 / ExPEC), this protein is HTH-type transcriptional regulator HdfR.